Reading from the N-terminus, the 461-residue chain is Transforming growth factor beta-1-induced transcript 1 protein (461 aa).

Methionine 1 is subject to N-acetylmethionine. A disordered region spans residues 1–87 (MEDLDALLSD…PFSSSSGVLG (87 aa)). Positions 1–200 (MEDLDALLSD…GCPSPPGQTS (200 aa)) are transcription activation. The interval 1–240 (MEDLDALLSD…CNKPIAGQVV (240 aa)) is interaction with PTK2B/PYK2. Positions 3–15 (DLDALLSDLETTT) match the LD motif 1 motif. A Phosphothreonine modification is found at threonine 33. Residue tyrosine 38 is modified to Phosphotyrosine. Low complexity predominate over residues 44 to 53 (TGSGESSGTT). Tyrosine 60 carries the post-translational modification Phosphotyrosine. The residue at position 68 (serine 68) is a Phosphoserine. The interval 83-136 (SGVLGNGLCELDRLLQELNATQFNITDEIMSQFPSSKMAEGEEKEDQSEDKSSP) is interaction with PTK2/FAK1. The LD motif 2 signature appears at 92–104 (ELDRLLQELNATQ). Residues 116 to 154 (PSSKMAEGEEKEDQSEDKSSPTVPPSPFPAPSKPSATSA) are disordered. The segment covering 137–147 (TVPPSPFPAPS) has biased composition (pro residues). Phosphoserine is present on residues serine 141, serine 164, and serine 186. The short motif at 157–168 (ELDRLMASLSDF) is the LD motif 3 element. Residues 171–204 (QNHLPASGPPQPPAASPTREGCPSPPGQTSKGSL) form a disordered region. Residue threonine 188 is modified to Phosphothreonine. Serine 194 bears the Phosphoserine mark. An LD motif 4 motif is present at residues 203 to 215 (SLDTMLGLLQSDL). 4 consecutive LIM zinc-binding domains span residues 226–285 (GLCG…RFSP), 286–343 (RCGF…QLFA), 344–403 (PRCQ…QRGS), and 404–461 (LCAT…KLFG). Serine 403 is modified (phosphoserine). Threonine 407 is modified (phosphothreonine).

This sequence belongs to the paxillin family. As to quaternary structure, homooligomer. Interacts with PPARG. Interacts with TRAF4. Interacts with CRIP2. Interacts with HSPB1. Interacts with ILK. Interacts with LIMS1 and LIMS2. Interacts with NCK2. Interacts with NUDT16L1. Interacts with PAK. Interacts with PTPN12. Interacts with TCF3. Interacts with TCF7L2. Interacts with VCL. Interacts (via LD motif 3) with GIT1. Also interacts with GIT2. Forms a complex with ARHGEF7. Interacts with AR/androgen receptor in a ligand-dependent manner. Interacts with CSK. Interacts with PTK2/FAK1 and PTK2B/PYK2. Interacts with SLC6A3. Interacts with SLC6A4. Interacts with NR3C1. Interacts with SMAD3. Interacts with MAPK15. Interacts with SRC. Interacts with LYN. Interacts with talin. Interacts (via LIM zinc-binding domain 2) with CBLC (via RING-type zinc finger); the interaction is direct and enhances CBLC E3 ubiquitin-protein ligase activity. Interacts with PARVA. Interacts with PXN. Post-translationally, phosphorylated by gonadotropin-releasing hormone-activated SRC. In terms of tissue distribution, ubiquitously expressed. Higher expression is detected in lung and spleen. Expression decreases during pregnancy in mammary glands. Expressed in all brain areas, with higher levels in cerebellum, prefrontal cortex and hypothalamus. Expressed in smooth muscle, myoepithelial cells and platelets (at protein level). Preferentially expressed in mesenchymal versus epithelial cells (at protein level).

The protein localises to the cell junction. Its subcellular location is the focal adhesion. It is found in the nucleus matrix. The protein resides in the cytoplasm. It localises to the cytoskeleton. Functions as a molecular adapter coordinating multiple protein-protein interactions at the focal adhesion complex and in the nucleus. Links various intracellular signaling modules to plasma membrane receptors and regulates the Wnt and TGFB signaling pathways. May also regulate SLC6A3 and SLC6A4 targeting to the plasma membrane hence regulating their activity. In the nucleus, functions as a nuclear receptor coactivator regulating glucocorticoid, androgen, mineralocorticoid and progesterone receptor transcriptional activity. May play a role in the processes of cell growth, proliferation, migration, differentiation and senescence. May have a zinc-dependent DNA-binding activity. This chain is Transforming growth factor beta-1-induced transcript 1 protein (Tgfb1i1), found in Mus musculus (Mouse).